Reading from the N-terminus, the 455-residue chain is Gamma-aminobutyric acid receptor subunit alpha-1 (455 aa).

The signal sequence occupies residues 1-27 (MKRLLVLCDCLWAWSLLLNALTERSYG). Topologically, residues 28-253 (QTSSQDELKD…FHLKRKIGYF (226 aa)) are extracellular. N-linked (GlcNAc...) asparagine glycosylation is present at asparagine 38. Arginine 94 is a binding site for 4-aminobutanoate. Asparagine 138 is a glycosylation site (N-linked (GlcNAc...) asparagine). A 4-aminobutanoate-binding site is contributed by threonine 157. The cysteines at positions 166 and 180 are disulfide-linked. Residues 254–274 (VIQTYLPCIMTVILSQVSFWL) form a helical membrane-spanning segment. Topologically, residues 275–279 (NRESV) are cytoplasmic. Residues 280–301 (PARTVFGVTTVLTMTTLSISAR) form a helical membrane-spanning segment. The Extracellular portion of the chain corresponds to 302 to 311 (NSLPKVAYAT). A helical membrane pass occupies residues 312–333 (AMDWFIAVCYAFVFSALIEFAT). Topologically, residues 334-420 (VNYFTKRGYA…TFNSVSKIDR (87 aa)) are cytoplasmic. Residues 421–440 (LSRIAFPLLFGIFNLVYWAT) form a helical membrane-spanning segment. Residues 441 to 455 (YLNREPQLKAPTPHQ) lie on the Extracellular side of the membrane.

The protein belongs to the ligand-gated ion channel (TC 1.A.9) family. Gamma-aminobutyric acid receptor (TC 1.A.9.5) subfamily. GABRA1 sub-subfamily. Heteropentamer, formed by a combination of alpha (GABRA1-6), beta (GABRB1-3), gamma (GABRG1-3), delta (GABRD), epsilon (GABRE), rho (GABRR1-3), pi (GABRP) and theta (GABRQ) subunits, each subunit exhibiting distinct physiological and pharmacological properties. Brain.

It is found in the postsynaptic cell membrane. It localises to the cell membrane. It catalyses the reaction chloride(in) = chloride(out). Allosterically activated by benzodiazepines, the neuroanesthetic alphaxalone and pentobarbital. Inhibited by the antagonist bicuculline. Potentiated by histamine. Functionally, alpha subunit of the heteropentameric ligand-gated chloride channel gated by gamma-aminobutyric acid (GABA), a major inhibitory neurotransmitter in the brain. GABA-gated chloride channels, also named GABA(A) receptors (GABAAR), consist of five subunits arranged around a central pore and contain GABA active binding site(s) located at the alpha and beta subunit interface(s). When activated by GABA, GABAARs selectively allow the flow of chloride anions across the cell membrane down their electrochemical gradient. Chloride influx into the postsynaptic neuron following GABAAR opening decreases the neuron ability to generate a new action potential, thereby reducing nerve transmission. The GABAARs can also initiate the formation of functional inhibitory GABAergic synapses. GABAARs function also as histamine receptor where histamine binds at the interface of two neighboring beta subunits and potentiates GABA response. In Gallus gallus (Chicken), this protein is Gamma-aminobutyric acid receptor subunit alpha-1 (GABRA1).